The primary structure comprises 447 residues: Probable asparagine--tRNA ligase, cytoplasmic (447 aa).

It belongs to the class-II aminoacyl-tRNA synthetase family.

It is found in the cytoplasm. It carries out the reaction tRNA(Asn) + L-asparagine + ATP = L-asparaginyl-tRNA(Asn) + AMP + diphosphate + H(+). The protein is Probable asparagine--tRNA ligase, cytoplasmic of Vairimorpha ceranae (strain BRL01) (Microsporidian parasite).